Reading from the N-terminus, the 361-residue chain is Prostaglandin D2 receptor (361 aa).

Residues 1-21 lie on the Extracellular side of the membrane; sequence MRPLFYRCHNTTSVEKGNSAT. The N-linked (GlcNAc...) asparagine glycan is linked to N10. The chain crosses the membrane as a helical span at residues 22-42; it reads MGGVLFSTGLVGNLLALGLLA. At 43–58 the chain is on the cytoplasmic side; that stretch reads RSGLGSCPPRSPRPPP. The helical transmembrane segment at 59-79 threads the bilayer; that stretch reads SVFYVLVFGLTITDLLGKCLV. The Extracellular portion of the chain corresponds to 80-107; the sequence is SPFVLSAYAQNRSLRELVPGSDSSLCQA. N90 is a glycosylation site (N-linked (GlcNAc...) asparagine). A disulfide bond links C105 and C183. A helical transmembrane segment spans residues 108–128; the sequence is FAFIMSFFGLASTLQLLAMAL. At 129–150 the chain is on the cytoplasmic side; that stretch reads ECWLSLGHPFFHRRHLTPRRGA. The helical transmembrane segment at 151-171 threads the bilayer; sequence MVAPVVGAFCLAFCALPLVGF. Topologically, residues 172 to 195 are extracellular; sequence GKFVQYCPGTWCFFQMVHEERSLS. Residues 196 to 216 form a helical membrane-spanning segment; the sequence is VLSYSVLYASLMLLLVLAIVL. The Cytoplasmic segment spans residues 217–262; that stretch reads CNLSAMRNLYAMHLRLRGLLRPGSRERAEPGAGEREATPLHLEELD. Residues 263–283 form a helical membrane-spanning segment; sequence HLLLLALMTVLFTMCSLPLIY. Topologically, residues 284-310 are extracellular; sequence RAYYGAFKAVPEQNGTTEETEDLRALR. A glycan (N-linked (GlcNAc...) asparagine) is linked at N297. A helical transmembrane segment spans residues 311-331; that stretch reads FLSVISIVDPWIFIIFRTSVF. Residues 332–361 lie on the Cytoplasmic side of the membrane; sequence RMFFRKIFIRPLIYRNWHSNSCQTNMESSL.

It belongs to the G-protein coupled receptor 1 family.

It is found in the cell membrane. Functionally, receptor for prostaglandin D2 (PGD2). The activity of this receptor is mainly mediated by G(s) proteins that stimulate adenylate cyclase, resulting in an elevation of intracellular cAMP. A mobilization of calcium is also observed, but without formation of inositol 1,4,5-trisphosphate. Involved in PLA2G3-dependent maturation of mast cells. PLA2G3 is secreted by immature mast cells and acts on nearby fibroblasts upstream to PTDGS to synthesize PGD2, which in turn promotes mast cell maturation and degranulation via PTGDR. In Bos taurus (Bovine), this protein is Prostaglandin D2 receptor (PTGDR).